A 220-amino-acid polypeptide reads, in one-letter code: tRNA (guanine-N(7)-)-methyltransferase (220 aa).

The S-adenosyl-L-methionine site is built by Glu-44, Glu-69, Asn-96, and Asp-118. The active site involves Asp-118. Substrate is bound at residue Lys-122. The segment at 124 to 129 (RHEKRR) is interaction with RNA. Substrate contacts are provided by residues Asp-154 and 191–194 (TEYE).

The protein belongs to the class I-like SAM-binding methyltransferase superfamily. TrmB family.

The catalysed reaction is guanosine(46) in tRNA + S-adenosyl-L-methionine = N(7)-methylguanosine(46) in tRNA + S-adenosyl-L-homocysteine. Its pathway is tRNA modification; N(7)-methylguanine-tRNA biosynthesis. Functionally, catalyzes the formation of N(7)-methylguanine at position 46 (m7G46) in tRNA. This is tRNA (guanine-N(7)-)-methyltransferase from Geobacillus sp. (strain WCH70).